The sequence spans 266 residues: Thiazole synthase (266 aa).

The active-site Schiff-base intermediate with DXP is the K110. 1-deoxy-D-xylulose 5-phosphate contacts are provided by residues G171, 197-198 (AG), and 219-220 (AT).

It belongs to the ThiG family. As to quaternary structure, homotetramer. Forms heterodimers with either ThiH or ThiS.

It is found in the cytoplasm. The catalysed reaction is [ThiS sulfur-carrier protein]-C-terminal-Gly-aminoethanethioate + 2-iminoacetate + 1-deoxy-D-xylulose 5-phosphate = [ThiS sulfur-carrier protein]-C-terminal Gly-Gly + 2-[(2R,5Z)-2-carboxy-4-methylthiazol-5(2H)-ylidene]ethyl phosphate + 2 H2O + H(+). It functions in the pathway cofactor biosynthesis; thiamine diphosphate biosynthesis. In terms of biological role, catalyzes the rearrangement of 1-deoxy-D-xylulose 5-phosphate (DXP) to produce the thiazole phosphate moiety of thiamine. Sulfur is provided by the thiocarboxylate moiety of the carrier protein ThiS. In vitro, sulfur can be provided by H(2)S. This chain is Thiazole synthase, found in Thermobifida fusca (strain YX).